Reading from the N-terminus, the 293-residue chain is Glycine N-methyltransferase (293 aa).

Val-2 is modified (N-acetylvaline). Residues Ser-4 and Tyr-6 each coordinate (6S)-5-methyl-5,6,7,8-tetrahydrofolate. Ser-10 bears the Phosphoserine mark. S-adenosyl-L-methionine contacts are provided by Tyr-22, Trp-31, Tyr-34, and Arg-41. Position 34 is a phosphotyrosine (Tyr-34). Lys-46 carries the post-translational modification N6-succinyllysine. S-adenosyl-L-methionine-binding positions include Ala-65, 86 to 88 (DAS), 117 to 118 (NW), 137 to 140 (LGNS), and Arg-176. 3 positions are modified to N6-succinyllysine: Lys-191, Lys-196, and Lys-201. His-215 provides a ligand contact to (6S)-5-methyl-5,6,7,8-tetrahydrofolate. Tyr-221 lines the S-adenosyl-L-methionine pocket. Arg-240 contacts (6S)-5-methyl-5,6,7,8-tetrahydrofolate.

The protein belongs to the class I-like SAM-binding methyltransferase superfamily. Glycine N-methyltransferase family. In terms of assembly, homotetramer. As to expression, abundant in liver.

It localises to the cytoplasm. It catalyses the reaction glycine + S-adenosyl-L-methionine = sarcosine + S-adenosyl-L-homocysteine + H(+). With respect to regulation, inhibited by 5-methyltetrahydrofolate monoglutamate and by 5-methyltetrahydrofolate pentaglutamate, inhibition is much more effective by the pentaglutamate form than by the monoglutamate form. Two molecules of 5-methyltetrahydrofolate are bound per tetramer. The binding sites are localized between subunits. Inhibitor binding may preclude movements of the polypeptide chain that are necessary for enzyme activity. Its function is as follows. Catalyzes the methylation of glycine by using S-adenosylmethionine (AdoMet) to form N-methylglycine (sarcosine) with the concomitant production of S-adenosylhomocysteine (AdoHcy), a reaction regulated by the binding of 5-methyltetrahydrofolate. Possible crucial role in the regulation of tissue concentration of AdoMet and of metabolism of methionine. The chain is Glycine N-methyltransferase (Gnmt) from Rattus norvegicus (Rat).